Consider the following 281-residue polypeptide: MGIKKYKPTSAARRLMTVSDFADITKDSPEKSLTEPLKRSGGRNVHGHITRRHQGGGHKRRYRVIDFKRRDKDGVPAKVVAVEYDPNRTANIALLHYADGEKRYILAPVGLSVGDTVFAGEGADIRPGNSLPLQNIPVGTVIHNVELKPGRGAQVIRSAGTSGQLMAKEDRYAQVRMPSGTVRKVLIECRATVGQVGNIEHEIIRIGKAGKSRWLGIRPTVRGLAMNPVDHPHGGGEGKSGQGNPHPVSPWGKKTKGLTTRTNKRTDKFIVSGRRQGARSQ.

Residues 27–38 (DSPEKSLTEPLK) show a composition bias toward basic and acidic residues. Disordered stretches follow at residues 27-59 (DSPE…GGHK) and 225-281 (AMNP…ARSQ). A compositionally biased stretch (basic residues) spans 45–59 (VHGHITRRHQGGGHK).

Belongs to the universal ribosomal protein uL2 family. As to quaternary structure, part of the 50S ribosomal subunit. Forms a bridge to the 30S subunit in the 70S ribosome.

Functionally, one of the primary rRNA binding proteins. Required for association of the 30S and 50S subunits to form the 70S ribosome, for tRNA binding and peptide bond formation. It has been suggested to have peptidyltransferase activity; this is somewhat controversial. Makes several contacts with the 16S rRNA in the 70S ribosome. In Myxococcus xanthus (strain DK1622), this protein is Large ribosomal subunit protein uL2.